The chain runs to 338 residues: Tryptophan--tRNA ligase (338 aa).

ATP-binding positions include 11 to 13 (QPS) and 19 to 20 (GN). The short motif at 12–20 (PSGELSIGN) is the 'HIGH' region element. L-tryptophan is bound at residue Asp135. ATP-binding positions include 147-149 (GSD), Val189, and 198-202 (KMSKS). Positions 198–202 (KMSKS) match the 'KMSKS' region motif.

It belongs to the class-I aminoacyl-tRNA synthetase family. Homodimer.

Its subcellular location is the cytoplasm. It carries out the reaction tRNA(Trp) + L-tryptophan + ATP = L-tryptophyl-tRNA(Trp) + AMP + diphosphate + H(+). Catalyzes the attachment of tryptophan to tRNA(Trp). This chain is Tryptophan--tRNA ligase, found in Aliivibrio fischeri (strain ATCC 700601 / ES114) (Vibrio fischeri).